We begin with the raw amino-acid sequence, 82 residues long: uncharacterized protein (82 aa).

The segment covering 55–64 (DQNTAPSTPS) has biased composition (polar residues). The tract at residues 55 to 82 (DQNTAPSTPSKILPKRLPSQSNLNNNNN) is disordered.

This is an uncharacterized protein from Dictyostelium discoideum (Social amoeba).